The chain runs to 275 residues: MTLQQQIIKALGAKPQINAEEEIRRSVDFLKSYLQTYPFIKSLVLGISGGQDSTLAGKLCQMAINELRQETGNESLQFIAVRLPYGVQADEQDCQDAIAFIQPDRVLTVNIKGAVLASEQALREAGIELSDFVRGNEKARERMKAQYSIAGMTSGVVVGTDHAAEAITGFFTKYGDGGTDINPLYRLNKRQGKQLLAALACPEHLYKKAPTADLEDDRPSLPDEVALGVTYDNIDDYLEGKNVPQQVARTIENWYLKTEHKRRPPITVFDDFWKK.

46-53 (GISGGQDS) is an ATP binding site. Position 52 (D52) interacts with Mg(2+). Position 140 (R140) interacts with deamido-NAD(+). ATP is bound at residue T160. Residue E165 coordinates Mg(2+). The deamido-NAD(+) site is built by K173 and D180. 2 residues coordinate ATP: K189 and T211. Deamido-NAD(+) is bound at residue 260–261 (HK).

Belongs to the NAD synthetase family. Homodimer.

It catalyses the reaction deamido-NAD(+) + NH4(+) + ATP = AMP + diphosphate + NAD(+) + H(+). It functions in the pathway cofactor biosynthesis; NAD(+) biosynthesis; NAD(+) from deamido-NAD(+) (ammonia route): step 1/1. Its function is as follows. Catalyzes the ATP-dependent amidation of deamido-NAD to form NAD. Uses ammonia as a nitrogen source. This chain is NH(3)-dependent NAD(+) synthetase, found in Shigella boydii serotype 4 (strain Sb227).